The sequence spans 165 residues: Selenoprotein F (165 aa).

The first 31 residues, 1 to 31 (MVAMAAGPSGCLVPAFGLRLLLATVLQAVSA), serve as a signal peptide directing secretion. Residue selenocysteine 96 is a non-standard amino acid, selenocysteine.

Forms a tight complex with UGGT1/UGCGL1. Interacts with UGGT2/UGCGL2. Interacts with RDH11. Post-translationally, the N-terminus is blocked. In terms of tissue distribution, higher levels in prostate and thyroid gland.

It is found in the endoplasmic reticulum lumen. In terms of biological role, may be involved in redox reactions associated with the formation of disulfide bonds. May contribute to the quality control of protein folding in the endoplasmic reticulum. May regulate protein folding by enhancing the catalytic activity of UGGT1/UGCGL1 and UGGT2/UGCGL2. The chain is Selenoprotein F from Homo sapiens (Human).